A 426-amino-acid polypeptide reads, in one-letter code: Histidine--tRNA ligase (426 aa).

This sequence belongs to the class-II aminoacyl-tRNA synthetase family.

It localises to the cytoplasm. The enzyme catalyses tRNA(His) + L-histidine + ATP = L-histidyl-tRNA(His) + AMP + diphosphate + H(+). This Saccharolobus islandicus (strain Y.G.57.14 / Yellowstone #1) (Sulfolobus islandicus) protein is Histidine--tRNA ligase.